A 63-amino-acid polypeptide reads, in one-letter code: Beta-toxin NaTx36 (63 aa).

An LCN-type CS-alpha/beta domain is found at Lys1–Arg62. 4 disulfide bridges follow: Cys11–Cys61, Cys15–Cys36, Cys22–Cys43, and Cys26–Cys45.

It belongs to the long (4 C-C) scorpion toxin superfamily. Sodium channel inhibitor family. Beta subfamily. Expressed by the venom gland.

It localises to the secreted. Beta toxins bind sodium channels (Nav) and shift the voltage of activation towards more negative potentials thereby affecting sodium channel activation and promoting spontaneous and repetitive firing. Only when tested on grasshopper mouse channels, this toxin inhibits Nav1.8/SCN10A sodium currents in a concentration and voltage-dependent manner (IC(50)=680 nM). This toxin hyperpolarizes the voltage dependence of Nav1.8/SCN10A activation, as well as steady-state fast inactivation and slow inactivation. In contrast to most beta scorpion toxins, this toxin inhibits grasshopper mouse Nav1.8/SCN10A currents through modulation of the domain I S4 voltage sensor, and the domain II second S5-S6 extracellular pore loop. The protein is Beta-toxin NaTx36 of Centruroides sculpturatus (Arizona bark scorpion).